A 356-amino-acid polypeptide reads, in one-letter code: Phosphoribosylformylglycinamidine cyclo-ligase (356 aa).

Belongs to the AIR synthase family.

The protein localises to the cytoplasm. The enzyme catalyses 2-formamido-N(1)-(5-O-phospho-beta-D-ribosyl)acetamidine + ATP = 5-amino-1-(5-phospho-beta-D-ribosyl)imidazole + ADP + phosphate + H(+). It participates in purine metabolism; IMP biosynthesis via de novo pathway; 5-amino-1-(5-phospho-D-ribosyl)imidazole from N(2)-formyl-N(1)-(5-phospho-D-ribosyl)glycinamide: step 2/2. The sequence is that of Phosphoribosylformylglycinamidine cyclo-ligase from Acinetobacter baumannii (strain AB307-0294).